Here is a 342-residue protein sequence, read N- to C-terminus: Endoplasmic reticulum junction formation protein lunapark-1 (342 aa).

Topologically, residues 1–39 are cytoplasmic; that stretch reads MGNLFSRNKSPATELERVALSIDDLKKRLQTISSSNTNT. The stretch at 13 to 34 forms a coiled coil; the sequence is TELERVALSIDDLKKRLQTISS. Residues 40–60 form a helical membrane-spanning segment; it reads LYYYYMSIVVILSIAMAHTWL. Over 61-68 the chain is Lumenal; it reads RFEDPQKT. Residues 69-89 form a helical membrane-spanning segment; that stretch reads YVACALMLGAIGIVLAGRYVI. Topologically, residues 90-342 are cytoplasmic; sequence NGFFSWRTNR…ESKTMETEFH (253 aa). The stretch at 102–136 forms a coiled coil; sequence QKLENAISQKTTLLDLVKETLKFKEAKEILDRYEK. Residues 161-191 form a disordered region; the sequence is ADSSMFATPKQEQKRVETPTAQGPNSAMNSM. Over residues 179-191 the composition is skewed to polar residues; it reads PTAQGPNSAMNSM. Residues 236–261 form a C4-type; plays a role in ER morphology zinc finger; it reads CSICHTHNGMSTPAEYPYISFRCFEC. Residues 278 to 342 form a disordered region; sequence RPPMGPKGIQ…ESKTMETEFH (65 aa). Residues 295-321 are compositionally biased toward polar residues; it reads SENTHNMMENQKPSTDLTPSASQNGSE. Basic and acidic residues predominate over residues 322–342; it reads KGSDSENEKVPESKTMETEFH.

This sequence belongs to the lunapark family. As to expression, expressed in cell bodies along the ventral cord around the pharynx and the tail both in larvae and adults. Also expressed in muscles and hypodermal cells.

Its subcellular location is the endoplasmic reticulum membrane. Its function is as follows. Plays a role in tubular endoplasmic reticulum network formation and maintenance. May be involved in central nervous system development. Has a presynaptic role in neurotransmission. Likely to operate in synaptogenesis by regulating vesicular transport or localization. Required for correct localization of rab-3 and snb-1. The sequence is that of Endoplasmic reticulum junction formation protein lunapark-1 (lnp-1) from Caenorhabditis elegans.